Here is a 336-residue protein sequence, read N- to C-terminus: Mitochondrial import receptor subunit TOM40 homolog (336 aa).

The segment at 1–58 (MGNVLAASSPAPPPAGSPPVPGLVSVPPGFTMPPVAGLTPTPDKKEPQEERLPNPGTF) is disordered. The segment covering 10–21 (PAPPPAGSPPVP) has biased composition (pro residues). Over residues 42–52 (PDKKEPQEERL) the composition is skewed to basic and acidic residues.

It belongs to the Tom40 family. In terms of assembly, forms part of the preprotein translocase complex of the outer mitochondrial membrane (TOM complex). Interacts with mitochondrial targeting sequences.

It is found in the mitochondrion outer membrane. Functionally, channel-forming protein essential for import of protein precursors into mitochondria. The polypeptide is Mitochondrial import receptor subunit TOM40 homolog (tomm40) (Xenopus laevis (African clawed frog)).